The primary structure comprises 439 residues: GTPase Der (439 aa).

EngA-type G domains are found at residues 2 to 166 and 176 to 351; these read SVVA…PAPA and TRLA…IEFN. GTP contacts are provided by residues 8 to 15, 55 to 59, 118 to 121, 182 to 189, 229 to 233, and 294 to 297; these read GRPNVGKS, DTGGF, NKVD, DTAGI, and NKWD. Positions 352 to 436 constitute a KH-like domain; it reads RQVPTGVLNR…PIRLKFKDRN (85 aa).

Belongs to the TRAFAC class TrmE-Era-EngA-EngB-Septin-like GTPase superfamily. EngA (Der) GTPase family. In terms of assembly, associates with the 50S ribosomal subunit.

GTPase that plays an essential role in the late steps of ribosome biogenesis. The chain is GTPase Der from Syntrophotalea carbinolica (strain DSM 2380 / NBRC 103641 / GraBd1) (Pelobacter carbinolicus).